The chain runs to 360 residues: Fructose import permease protein FrcC (360 aa).

Transmembrane regions (helical) follow at residues 48 to 68 (AAVP…ILGG), 84 to 106 (AIVG…DLSV), 125 to 145 (GFPP…CGYI), 155 to 175 (LPPF…NFLY), 205 to 225 (AVFT…WYVL), 254 to 274 (MLIS…WALI), 284 to 304 (AGQF…ISLF), 310 to 330 (IMGM…LRLM), and 335 to 355 (QWTY…DQWI).

This sequence belongs to the binding-protein-dependent transport system permease family. As to quaternary structure, the complex is composed of two ATP-binding proteins (FrcA), two transmembrane proteins (FrcC) and a solute-binding protein (FrcB).

Its subcellular location is the cell inner membrane. Functionally, part of the high-affinity ABC transporter complex FrcBCA involved in fructose uptake. Is also a high-affinity transporter for ribose and mannose. Responsible for the translocation of the substrate across the membrane. This chain is Fructose import permease protein FrcC, found in Rhizobium meliloti (Ensifer meliloti).